Consider the following 194-residue polypeptide: Glycerol-3-phosphate acyltransferase (194 aa).

Transmembrane regions (helical) follow at residues leucine 7–cysteine 27, leucine 59–glycine 79, glycine 86–glycine 106, alanine 116–valine 136, and alanine 157–isoleucine 177.

Belongs to the PlsY family. In terms of assembly, probably interacts with PlsX.

Its subcellular location is the cell inner membrane. It carries out the reaction an acyl phosphate + sn-glycerol 3-phosphate = a 1-acyl-sn-glycero-3-phosphate + phosphate. Its pathway is lipid metabolism; phospholipid metabolism. In terms of biological role, catalyzes the transfer of an acyl group from acyl-phosphate (acyl-PO(4)) to glycerol-3-phosphate (G3P) to form lysophosphatidic acid (LPA). This enzyme utilizes acyl-phosphate as fatty acyl donor, but not acyl-CoA or acyl-ACP. In Hahella chejuensis (strain KCTC 2396), this protein is Glycerol-3-phosphate acyltransferase.